We begin with the raw amino-acid sequence, 232 residues long: Flagellar L-ring protein (232 aa).

The signal sequence occupies residues 1-21 (MQKNAAHTYAISSLLVLSLTG). Cys22 is lipidated: N-palmitoyl cysteine. Cys22 carries S-diacylglycerol cysteine lipidation.

The protein belongs to the FlgH family. As to quaternary structure, the basal body constitutes a major portion of the flagellar organelle and consists of four rings (L,P,S, and M) mounted on a central rod.

It is found in the cell outer membrane. It localises to the bacterial flagellum basal body. Functionally, assembles around the rod to form the L-ring and probably protects the motor/basal body from shearing forces during rotation. The chain is Flagellar L-ring protein from Shigella boydii serotype 4 (strain Sb227).